The primary structure comprises 256 residues: Thiazole synthase (256 aa).

K95 functions as the Schiff-base intermediate with DXP in the catalytic mechanism. 1-deoxy-D-xylulose 5-phosphate is bound by residues G156, 182–183 (AG), and 204–205 (NT).

It belongs to the ThiG family. In terms of assembly, homotetramer. Forms heterodimers with either ThiH or ThiS.

The protein resides in the cytoplasm. The catalysed reaction is [ThiS sulfur-carrier protein]-C-terminal-Gly-aminoethanethioate + 2-iminoacetate + 1-deoxy-D-xylulose 5-phosphate = [ThiS sulfur-carrier protein]-C-terminal Gly-Gly + 2-[(2R,5Z)-2-carboxy-4-methylthiazol-5(2H)-ylidene]ethyl phosphate + 2 H2O + H(+). The protein operates within cofactor biosynthesis; thiamine diphosphate biosynthesis. Catalyzes the rearrangement of 1-deoxy-D-xylulose 5-phosphate (DXP) to produce the thiazole phosphate moiety of thiamine. Sulfur is provided by the thiocarboxylate moiety of the carrier protein ThiS. In vitro, sulfur can be provided by H(2)S. The sequence is that of Thiazole synthase from Escherichia coli O81 (strain ED1a).